Consider the following 351-residue polypeptide: Dihydroorotate dehydrogenase (quinone) (351 aa).

FMN is bound by residues 67–71 and Thr-91; that span reads AGFDK. Position 71 (Lys-71) interacts with substrate. Position 116 to 120 (116 to 120) interacts with substrate; that stretch reads NAMGF. FMN is bound by residues Asn-145 and Asn-178. Asn-178 provides a ligand contact to substrate. Catalysis depends on Ser-181, which acts as the Nucleophile. Asn-183 contributes to the substrate binding site. Residues Lys-214 and Thr-242 each contribute to the FMN site. Residue 243–244 coordinates substrate; sequence NT. Residues Gly-262, Gly-291, and 312 to 313 contribute to the FMN site; that span reads YT.

The protein belongs to the dihydroorotate dehydrogenase family. Type 2 subfamily. As to quaternary structure, monomer. FMN is required as a cofactor.

The protein localises to the cell membrane. The catalysed reaction is (S)-dihydroorotate + a quinone = orotate + a quinol. It participates in pyrimidine metabolism; UMP biosynthesis via de novo pathway; orotate from (S)-dihydroorotate (quinone route): step 1/1. Its function is as follows. Catalyzes the conversion of dihydroorotate to orotate with quinone as electron acceptor. The chain is Dihydroorotate dehydrogenase (quinone) from Nitratiruptor sp. (strain SB155-2).